Here is a 357-residue protein sequence, read N- to C-terminus: Glucose 1-dehydrogenase (357 aa).

Asp-38 contributes to the Zn(2+) binding site. Substrate is bound by residues Thr-40 and His-49. The Zn(2+) site is built by His-63 and Glu-64. Substrate is bound by residues Glu-114 and Glu-150. A Zn(2+)-binding site is contributed by Glu-150. NADP(+)-binding positions include 181–184, 207–208, Ser-228, 272–274, and 301–303; these read NGSL, RR, LGV, and SVN. Asn-303 serves as a coordination point for substrate.

This sequence belongs to the zinc-containing alcohol dehydrogenase family. Glucose 1-dehydrogenase subfamily. As to quaternary structure, homodimer. Zn(2+) is required as a cofactor.

It catalyses the reaction D-glucose + NAD(+) = D-glucono-1,5-lactone + NADH + H(+). The enzyme catalyses D-glucose + NADP(+) = D-glucono-1,5-lactone + NADPH + H(+). With respect to regulation, activated by molar concentrations of KCl or NaCl. Inhibited by EDTA in vitro. In terms of biological role, catalyzes the NAD(P)(+)-dependent oxidation of D-glucose to D-gluconate. Displays broad substrate specificity since it is able to catalyze the oxidation of a number of alternative aldose sugars, such as D-xylose, D-galactose, and D-fucose, to the corresponding glyconate. Can utilize both NAD(+) and NADP(+) as electron acceptor, with a preference for NADP(+). Physiologically, seems to be involved in the degradation of glucose through a modified Entner-Doudoroff pathway. This is Glucose 1-dehydrogenase from Haloferax mediterranei (strain ATCC 33500 / DSM 1411 / JCM 8866 / NBRC 14739 / NCIMB 2177 / R-4) (Halobacterium mediterranei).